The chain runs to 749 residues: uncharacterized protein (749 aa).

Disordered regions lie at residues 1–58 (MGTV…QPSN), 124–170 (DANA…PSPL), 200–291 (SRFS…PPVS), and 385–405 (YTWSRHSTSGPSRSTVLNPST). Low complexity predominate over residues 13 to 24 (LNNGLSSNNGSS). 4 stretches are compositionally biased toward polar residues: residues 149 to 159 (KSASKDSNAFN), 238 to 252 (ESKTSPFATRRPSLN), 265 to 275 (LNYQNSSLNPS), and 388 to 405 (SRHSTSGPSRSTVLNPST). The region spanning 644 to 729 (KRILRKAQPH…YKTRIWMCAV (86 aa)) is the PSP1 C-terminal domain.

This is an uncharacterized protein from Schizosaccharomyces pombe (strain 972 / ATCC 24843) (Fission yeast).